The sequence spans 641 residues: Bilirubin reductase (641 aa).

Q96 lines the FMN pocket. R167 functions as the Proton donor in the catalytic mechanism. Residues K214, R295, and 317-318 each bind FMN; that span reads GR. 4 residues coordinate [4Fe-4S] cluster: C341, C344, C348, and C360. Residues A391, E410, Q418, K428, and A455 each coordinate FAD.

The protein in the N-terminal section; belongs to the NADH:flavin oxidoreductase/NADH oxidase family. FAD is required as a cofactor. The cofactor is FMN. Requires [4Fe-4S] cluster as cofactor.

It catalyses the reaction urobilinogen + 4 A = (4Z,15Z)-bilirubin IXalpha + 4 AH2. The catalysed reaction is urobilinogen + 2 A = (4Z,15Z)-mesobilirubin IXalpha + 2 AH2. It participates in porphyrin-containing compound metabolism; protoheme degradation. Bilirubin reductase that catalyzes reduction of mesobilirubin and/or bilirubin to urobilinogen, a key step during heme degradation. Urobilinogen then spontaneously degrades into urobilin, which gives urine its distinctive yellow color. This is Bilirubin reductase from Mediterraneibacter gnavus (strain CC55_001C).